A 105-amino-acid chain; its full sequence is N(4)-acetylcytidine amidohydrolase (105 aa).

An ASCH domain is found at 7–93; that stretch reads TFFERFEHDI…VIAEIYPGLE (87 aa). The Proton acceptor role is filled by Lys-21. Thr-24 (nucleophile) is an active-site residue. Glu-74 serves as the catalytic Proton donor.

The protein belongs to the N(4)-acetylcytidine amidohydrolase family.

It carries out the reaction N(4)-acetylcytidine + H2O = cytidine + acetate + H(+). It catalyses the reaction N(4)-acetyl-2'-deoxycytidine + H2O = 2'-deoxycytidine + acetate + H(+). The enzyme catalyses N(4)-acetylcytosine + H2O = cytosine + acetate + H(+). Functionally, catalyzes the hydrolysis of N(4)-acetylcytidine (ac4C). The chain is N(4)-acetylcytidine amidohydrolase from Shewanella baltica (strain OS155 / ATCC BAA-1091).